Here is a 152-residue protein sequence, read N- to C-terminus: Large ribosomal subunit protein uL15 (152 aa).

The tract at residues 1–57 is disordered; the sequence is MTSTLNTLKSNSGSRKKKLRKGRGIAAGQGASCGFGMRGQKSRSGRPTRPGFEGGQM. The segment covering 14 to 23 has biased composition (basic residues); that stretch reads SRKKKLRKGR. The span at 25-37 shows a compositional bias: gly residues; it reads IAAGQGASCGFGM.

Belongs to the universal ribosomal protein uL15 family. In terms of assembly, part of the 50S ribosomal subunit.

In terms of biological role, binds to the 23S rRNA. In Prochlorococcus marinus (strain MIT 9312), this protein is Large ribosomal subunit protein uL15.